We begin with the raw amino-acid sequence, 67 residues long: Conotoxin TsMMSK-B021 (67 aa).

The signal sequence occupies residues 1-20 (MMSKLGVLLTICLLLFPLTA). Residues 21–50 (VQLDGDQPADLPELRAQDFAPERSPWFDPV) constitute a propeptide that is removed on maturation. Disulfide bonds link Cys-53-Cys-65, Cys-54-Cys-61, and Cys-58-Cys-64. At Pro-63 the chain carries 4-hydroxyproline.

This sequence belongs to the conotoxin M superfamily. As to expression, expressed by the venom duct.

It localises to the secreted. This Conus tessulatus (Tessellate cone) protein is Conotoxin TsMMSK-B021.